The chain runs to 254 residues: Alcohol dehydrogenase (254 aa).

An NAD(+)-binding site is contributed by 10-33; the sequence is FVAGLGGIGLDTSREIVKSGPKNL. S138 provides a ligand contact to substrate. Y151 (proton acceptor) is an active-site residue.

Belongs to the short-chain dehydrogenases/reductases (SDR) family. As to quaternary structure, homodimer.

The enzyme catalyses a primary alcohol + NAD(+) = an aldehyde + NADH + H(+). The catalysed reaction is a secondary alcohol + NAD(+) = a ketone + NADH + H(+). The protein is Alcohol dehydrogenase (Adh) of Drosophila heteroneura (Fruit fly).